The sequence spans 908 residues: NADH-quinone oxidoreductase subunit G (908 aa).

Residues 2 to 83 (ATIHVDGKEY…GTFISIDDEE (82 aa)) form the 2Fe-2S ferredoxin-type domain. [2Fe-2S] cluster is bound by residues cysteine 34, cysteine 45, cysteine 48, and cysteine 67. Residues 83 to 122 (EAKQFRESVVEWLMTNHPHDCPVCEEGGNCHLQDMTVMTG) form the 4Fe-4S His(Cys)3-ligated-type domain. [4Fe-4S] cluster contacts are provided by histidine 99, cysteine 103, cysteine 106, cysteine 112, cysteine 151, cysteine 154, cysteine 157, cysteine 201, cysteine 228, cysteine 231, cysteine 235, and cysteine 263. The 57-residue stretch at 221-277 (MQFAPSICQQCSIGCNISPGERYGELRRIENRYNGTVNHYFLCDRGRFGYGYVNLKD) folds into the 4Fe-4S Mo/W bis-MGD-type domain.

The protein belongs to the complex I 75 kDa subunit family. In terms of assembly, composed of 13 different subunits. Subunits NuoCD, E, F, and G constitute the peripheral sector of the complex. [2Fe-2S] cluster serves as cofactor. It depends on [4Fe-4S] cluster as a cofactor.

Its subcellular location is the cytoplasm. The protein resides in the cell inner membrane. The catalysed reaction is a quinone + NADH + 5 H(+)(in) = a quinol + NAD(+) + 4 H(+)(out). NDH-1 shuttles electrons from NADH, via FMN and iron-sulfur (Fe-S) centers, to quinones in the respiratory chain. The immediate electron acceptor for the enzyme in this species is believed to be ubiquinone. Couples the redox reaction to proton translocation (for every two electrons transferred, four hydrogen ions are translocated across the cytoplasmic membrane), and thus conserves the redox energy in a proton gradient. This chain is NADH-quinone oxidoreductase subunit G (nuoG), found in Escherichia coli (strain K12).